Reading from the N-terminus, the 738-residue chain is Putative RNA-binding protein EEED8.10 (738 aa).

In terms of domain architecture, RRM spans 112–201; that stretch reads RKIVVSNISA…QVMVVSAYVS (90 aa). Residues 211-237 form a disordered region; the sequence is LSDDVGSREDTPLSRASSTQSLASGSE. Residues 224 to 237 show a composition bias toward polar residues; that stretch reads SRASSTQSLASGSE. The 59-residue stretch at 239–297 folds into the F-box domain; the sequence is SFNLGNVPDKILRRVISFLPIHETIRLERVNKKFMEESIKSWELVNKIALARETVFNKQ.

This Caenorhabditis elegans protein is Putative RNA-binding protein EEED8.10.